The following is a 108-amino-acid chain: uncharacterized protein (108 aa).

The interval 81 to 108 (TNHHQQQQNHQNQQQQQQQPNGIFENNI) is disordered. Residues 83–99 (HHQQQQNHQNQQQQQQQ) are compositionally biased toward low complexity.

This is an uncharacterized protein from Dictyostelium discoideum (Social amoeba).